The sequence spans 665 residues: tRNA 5-methylaminomethyl-2-thiouridine biosynthesis bifunctional protein MnmC (665 aa).

The segment at 1 to 235 is tRNA (mnm(5)s(2)U34)-methyltransferase; the sequence is MTITRHAQID…KWEVLRGTFI (235 aa). The interval 266–665 is FAD-dependent cmnm(5)s(2)U34 oxidoreductase; sequence IGAGLAGCAT…RGKGKQTVGH (400 aa).

This sequence in the N-terminal section; belongs to the methyltransferase superfamily. tRNA (mnm(5)s(2)U34)-methyltransferase family. The protein in the C-terminal section; belongs to the DAO family. The cofactor is FAD.

It is found in the cytoplasm. The enzyme catalyses 5-aminomethyl-2-thiouridine(34) in tRNA + S-adenosyl-L-methionine = 5-methylaminomethyl-2-thiouridine(34) in tRNA + S-adenosyl-L-homocysteine + H(+). Catalyzes the last two steps in the biosynthesis of 5-methylaminomethyl-2-thiouridine (mnm(5)s(2)U) at the wobble position (U34) in tRNA. Catalyzes the FAD-dependent demodification of cmnm(5)s(2)U34 to nm(5)s(2)U34, followed by the transfer of a methyl group from S-adenosyl-L-methionine to nm(5)s(2)U34, to form mnm(5)s(2)U34. The protein is tRNA 5-methylaminomethyl-2-thiouridine biosynthesis bifunctional protein MnmC of Pseudomonas syringae pv. syringae (strain B728a).